The following is a 225-amino-acid chain: Elongation factor 1-beta (225 aa).

The GST C-terminal domain occupies 2-84 (GFGDLKSPAG…ALGKYGPADV (83 aa)). Lysine 7 is subject to N6-acetyllysine. Serine 8 and serine 42 each carry phosphoserine. The segment at 78–115 (KYGPADVEDTTGSGATDSKDDDDIDLFGSDDEEESEEA) is disordered. 2 positions are modified to phosphothreonine: threonine 88 and threonine 93. Phosphoserine occurs at positions 95 and 106. Acidic residues predominate over residues 96-113 (KDDDDIDLFGSDDEEESE). Lysine 147 participates in a covalent cross-link: Glycyl lysine isopeptide (Lys-Gly) (interchain with G-Cter in SUMO2). At serine 174 the chain carries Phosphoserine.

This sequence belongs to the EF-1-beta/EF-1-delta family. In terms of assembly, EF-1 is composed of 4 subunits: alpha, beta (alpha subunit of the eEF1B subcomplex), delta (beta subunit of the eEF1B subcomplex), and gamma (gamma subunit of the eEF1B subcomplex). Interacts with elongation factor EEF1A1. Phosphorylation affects the GDP/GTP exchange rate.

In terms of biological role, catalytic subunit of the guanine nucleotide exchange factor (GEF) (eEF1B subcomplex) of the eukaryotic elongation factor 1 complex (eEF1). Stimulates the exchange of GDP for GTP on elongation factor 1A (eEF1A), probably by displacing GDP from the nucleotide binding pocket in eEF1A. The chain is Elongation factor 1-beta (EEF1B2) from Homo sapiens (Human).